The chain runs to 342 residues: Replication factor C subunit 3 (342 aa).

Position 63-70 (63-70) interacts with ATP; the sequence is GPPGTGKT.

Belongs to the activator 1 small subunits family. As to quaternary structure, heteropentamer of subunits rfc1, rfc2, rfc3, rfc4 and rfc5 that forms a complex (RFC) with PCNA in the presence of ATP. Two other complexes exist where rfc1 can be replaced by either ctf18 or elg1 to form the ctf18-RFC or the elg1-RFC complexes respectively.

The protein localises to the nucleus. Functionally, the elongation of primed DNA templates by DNA polymerase delta and epsilon requires the action of the accessory proteins PCNA and activator 1. Subunit 3 binds ATP. Also involved in replication and DNA damage checkpoint controls, probably functioning as a checkpoint sensor. In Schizosaccharomyces pombe (strain 972 / ATCC 24843) (Fission yeast), this protein is Replication factor C subunit 3 (rfc3).